A 140-amino-acid polypeptide reads, in one-letter code: Nucleoside diphosphate kinase (140 aa).

ATP contacts are provided by K11, F59, R87, T93, R104, and N114. The Pros-phosphohistidine intermediate role is filled by H117.

Belongs to the NDK family. In terms of assembly, homotetramer. Requires Mg(2+) as cofactor.

It is found in the cytoplasm. The enzyme catalyses a 2'-deoxyribonucleoside 5'-diphosphate + ATP = a 2'-deoxyribonucleoside 5'-triphosphate + ADP. It carries out the reaction a ribonucleoside 5'-diphosphate + ATP = a ribonucleoside 5'-triphosphate + ADP. Functionally, major role in the synthesis of nucleoside triphosphates other than ATP. The ATP gamma phosphate is transferred to the NDP beta phosphate via a ping-pong mechanism, using a phosphorylated active-site intermediate. The chain is Nucleoside diphosphate kinase from Sinorhizobium medicae (strain WSM419) (Ensifer medicae).